The sequence spans 663 residues: uncharacterized protein (663 aa).

Residues 1-29 (MLDIGVIGRLKFATAFMAMSLLLVPAAEA) form the signal peptide.

The protein belongs to the bacterial solute-binding protein 5 family.

It localises to the periplasm. Functionally, possible binding-protein with either a transport or enzymatic activity. This is an uncharacterized protein from Sinorhizobium fredii (strain NBRC 101917 / NGR234).